Consider the following 581-residue polypeptide: Myoneurin (581 aa).

Residues 24-89 enclose the BTB domain; that stretch reads CDCTIVIGEF…IYTGTLNLDS (66 aa). Positions 167-193 are disordered; that stretch reads PKQGALAKKSSQTKKKKKAFNSQKTGQ. 2 short sequence motifs (nuclear localization signal) span residues 174 to 190 and 256 to 261; these read KKSS…NSQK and KRKRGK. The residue at position 288 (serine 288) is a Phosphoserine. 7 C2H2-type zinc fingers span residues 301–323, 329–351, 357–380, 386–408, 414–436, 442–464, and 470–493; these read PMCN…MRIH, YVCH…VRTH, YKCE…RMHH, YKCD…ARKH, YVCD…VRRH, YVCD…SRKH, and FICE…TKVH.

The protein belongs to the krueppel C2H2-type zinc-finger protein family.

The protein localises to the nucleus. In Bos taurus (Bovine), this protein is Myoneurin (MYNN).